A 323-amino-acid polypeptide reads, in one-letter code: Arginase-1 (323 aa).

The interval 1–27 (MSSKPKPIEIIGAPFSKGQPRGGVEKG) is disordered. K17 bears the N6-succinyllysine mark. 2 positions are modified to phosphoserine: S62 and S72. Residue K75 is modified to N6-succinyllysine. Mn(2+) is bound by residues H101, D124, H126, and D128. Residues 126 to 130 (HTDIN) and 137 to 139 (SGN) each bind substrate. S163 is modified (phosphoserine). D183 lines the substrate pocket. S217 carries the phosphoserine modification. Mn(2+) contacts are provided by D232 and D234. Substrate-binding residues include T246 and E277. T281 is modified (phosphothreonine).

The protein belongs to the arginase family. Homotrimer. Interacts with CMTM6. Mn(2+) serves as cofactor. In terms of tissue distribution, detected in liver (at protein level).

Its subcellular location is the cytoplasm. It is found in the cytoplasmic granule. The catalysed reaction is L-arginine + H2O = urea + L-ornithine. It participates in nitrogen metabolism; urea cycle; L-ornithine and urea from L-arginine: step 1/1. With respect to regulation, inactivated by diethyl pyrocarbonate (DEPC). Its function is as follows. Key element of the urea cycle converting L-arginine to urea and L-ornithine, which is further metabolized into metabolites proline and polyamides that drive collagen synthesis and bioenergetic pathways critical for cell proliferation, respectively; the urea cycle takes place primarily in the liver and, to a lesser extent, in the kidneys. Functions in L-arginine homeostasis in nonhepatic tissues characterized by the competition between nitric oxide synthase (NOS) and arginase for the available intracellular substrate arginine. Arginine metabolism is a critical regulator of innate and adaptive immune responses. Involved in an antimicrobial effector pathway in polymorphonuclear granulocytes (PMN). Upon PMN cell death is liberated from the phagolysosome and depletes arginine in the microenvironment leading to suppressed T cell and natural killer (NK) cell proliferation and cytokine secretion. In group 2 innate lymphoid cells (ILC2s) promotes acute type 2 inflammation in the lung and is involved in optimal ILC2 proliferation but not survival. Plays a role in the immune response of alternatively activated or M2 macrophages in processes such as wound healing and tissue regeneration, immune defense against multicellular pathogens and parasites, and immune suppression and allergic inflammation; the regulatory outcome seems to be organ specific. In tumor-infiltrating dendritic cells (DCs) and myeloid-derived suppressor cells (MDSCs) plays a role in suppression of T cell-mediated antitumor immunity. This is Arginase-1 (Arg1) from Rattus norvegicus (Rat).